Here is a 155-residue protein sequence, read N- to C-terminus: SsrA-binding protein (155 aa).

Belongs to the SmpB family.

The protein localises to the cytoplasm. Required for rescue of stalled ribosomes mediated by trans-translation. Binds to transfer-messenger RNA (tmRNA), required for stable association of tmRNA with ribosomes. tmRNA and SmpB together mimic tRNA shape, replacing the anticodon stem-loop with SmpB. tmRNA is encoded by the ssrA gene; the 2 termini fold to resemble tRNA(Ala) and it encodes a 'tag peptide', a short internal open reading frame. During trans-translation Ala-aminoacylated tmRNA acts like a tRNA, entering the A-site of stalled ribosomes, displacing the stalled mRNA. The ribosome then switches to translate the ORF on the tmRNA; the nascent peptide is terminated with the 'tag peptide' encoded by the tmRNA and targeted for degradation. The ribosome is freed to recommence translation, which seems to be the essential function of trans-translation. This chain is SsrA-binding protein, found in Streptococcus pyogenes serotype M4 (strain MGAS10750).